Consider the following 927-residue polypeptide: DNA mismatch repair protein MutS (927 aa).

ATP is bound at residue 646–653 (GPNMAGKS). The tract at residues 904–927 (SAQPGSAEQGESPDKHDEGKNSRG) is disordered. Positions 915 to 927 (SPDKHDEGKNSRG) are enriched in basic and acidic residues.

Belongs to the DNA mismatch repair MutS family.

In terms of biological role, this protein is involved in the repair of mismatches in DNA. It is possible that it carries out the mismatch recognition step. This protein has a weak ATPase activity. The protein is DNA mismatch repair protein MutS of Desulfovibrio desulfuricans (strain ATCC 27774 / DSM 6949 / MB).